Reading from the N-terminus, the 391-residue chain is Esterase (391 aa).

Positions 1–26 are cleaved as a signal peptide; the sequence is MEFPETNNNPIITLSFLLCMLSLAYA. The Nucleophile role is filled by serine 41. Residues asparagine 186, asparagine 193, and asparagine 313 are each glycosylated (N-linked (GlcNAc...) asparagine). Residues aspartate 347 and histidine 350 contribute to the active site.

This sequence belongs to the 'GDSL' lipolytic enzyme family. The N-terminus is blocked. In terms of processing, glycosylated.

In terms of biological role, has lipase and esterase activities. May be involved in plant defense. The protein is Esterase of Hevea brasiliensis (Para rubber tree).